Reading from the N-terminus, the 158-residue chain is RNA pyrophosphohydrolase (158 aa).

One can recognise a Nudix hydrolase domain in the interval 6–149 (GYRLNVGIVL…KRHVYRKVMK (144 aa)). The short motif at 38 to 59 (GGINIGETPEQAMYRELFEEIG) is the Nudix box element.

The protein belongs to the Nudix hydrolase family. RppH subfamily. The cofactor is a divalent metal cation.

Its function is as follows. Accelerates the degradation of transcripts by removing pyrophosphate from the 5'-end of triphosphorylated RNA, leading to a more labile monophosphorylated state that can stimulate subsequent ribonuclease cleavage. This Blochmanniella floridana protein is RNA pyrophosphohydrolase.